We begin with the raw amino-acid sequence, 652 residues long: Adhesion G protein-coupled receptor E3 (652 aa).

The N-terminal stretch at 1 to 21 (MQGPLLLPGLCFLLSLFGAVT) is a signal peptide. The Extracellular segment spans residues 22-357 (QKTKTSCAKC…TSQEEDPVLT (336 aa)). In terms of domain architecture, EGF-like 1 spans 24-66 (TKTSCAKCPPNASCVNNTHCTCNHGYTSGSGQKLFTFPLETCN). Intrachain disulfides connect cysteine 28-cysteine 37, cysteine 31-cysteine 43, cysteine 45-cysteine 65, cysteine 71-cysteine 85, cysteine 79-cysteine 94, and cysteine 96-cysteine 117. Residues asparagine 34 and asparagine 39 are each glycosylated (N-linked (GlcNAc...) asparagine). In terms of domain architecture, EGF-like 2; calcium-binding spans 67–118 (DINECTPPYSVYCGFNAVCYNVEGSFYCQCVPGYRLHSGNEQFSNSNENTCQ). N-linked (GlcNAc...) asparagine glycans are attached at residues asparagine 145, asparagine 189, asparagine 202, asparagine 250, asparagine 279, asparagine 327, and asparagine 334. The GAIN-B domain occupies 183–351 (KVLKIQNDSV…AVLMALTSQE (169 aa)). Cystine bridges form between cysteine 304/cysteine 333 and cysteine 321/cysteine 335. A GPS region spans residues 304 to 351 (CVYWKSTGQGSQWSRDGCFLIHVNKSHTMCNCSHLSSFAVLMALTSQE). A helical transmembrane segment spans residues 358-378 (VITYVGLSVSLLCLLLAALTF). Over 379-389 (LLCKAIRNTST) the chain is Cytoplasmic. Residues 390–410 (SLHLQLSLCLFLAHLLFLVGI) traverse the membrane as a helical segment. The Extracellular portion of the chain corresponds to 411-416 (DRTEPK). The chain crosses the membrane as a helical span at residues 417–437 (VLCSIIAGALHYLYLAAFTWM). Residues 438 to 464 (LLEGVHLFLTARNLTVVNYSSINRLMK) are Cytoplasmic-facing. A helical transmembrane segment spans residues 465–485 (WIMFPVGYGVPAVTVAISAAS). At 486–508 (WPHLYGTADRCWLHLDQGFMWSF) the chain is on the extracellular side. The chain crosses the membrane as a helical span at residues 509–529 (LGPVCAIFSANLVLFILVFWI). Over 530–557 (LKRKLSSLNSEVSTIQNTRMLAFKATAQ) the chain is Cytoplasmic. A helical membrane pass occupies residues 558 to 578 (LFILGCTWCLGLLQVGPAAQV). Over 579–580 (MA) the chain is Extracellular. Residues 581–601 (YLFTIINSLQGFFIFLVYCLL) form a helical membrane-spanning segment. The Cytoplasmic portion of the chain corresponds to 602-652 (SQQVQKQYQKWFREIVKSKSESETYTLSSKMGPDSKPSEGDVFPGQVKRKY). A disordered region spans residues 621 to 652 (SESETYTLSSKMGPDSKPSEGDVFPGQVKRKY).

This sequence belongs to the G-protein coupled receptor 2 family. Adhesion G-protein coupled receptor (ADGR) subfamily. In terms of assembly, forms a heterodimer, consisting of a large extracellular region (alpha subunit) non-covalently linked to a seven-transmembrane moiety (beta subunit). Proteolytically cleaved into 2 subunits, an extracellular alpha subunit and a seven-transmembrane subunit. Displays a predominantly leukocyte-restricted expression, with highest levels in neutrophils, monocytes and macrophages.

It is found in the cell membrane. Its subcellular location is the secreted. Functionally, orphan receptor that may play a role myeloid-myeloid interactions during immune and inflammatory responses. A ligand for the soluble form of this receptor is present at the surface of monocytes-derived macrophages and activated neutrophils. This is Adhesion G protein-coupled receptor E3 from Homo sapiens (Human).